Reading from the N-terminus, the 634-residue chain is Probable beta-glucosidase C (634 aa).

The first 19 residues, 1–19, serve as a signal peptide directing secretion; it reads MRIDCTVASLTALASGCQA. N-linked (GlcNAc...) asparagine glycans are attached at residues N90, N112, N219, and N270. Residue D337 is part of the active site. N-linked (GlcNAc...) asparagine glycosylation is found at N360, N476, N484, and N524.

Belongs to the glycosyl hydrolase 3 family.

The protein resides in the secreted. The catalysed reaction is Hydrolysis of terminal, non-reducing beta-D-glucosyl residues with release of beta-D-glucose.. The protein operates within glycan metabolism; cellulose degradation. Its function is as follows. Beta-glucosidases are one of a number of cellulolytic enzymes involved in the degradation of cellulosic biomass. Catalyzes the last step releasing glucose from the inhibitory cellobiose. The sequence is that of Probable beta-glucosidase C (bglC) from Aspergillus flavus (strain ATCC 200026 / FGSC A1120 / IAM 13836 / NRRL 3357 / JCM 12722 / SRRC 167).